We begin with the raw amino-acid sequence, 312 residues long: Olfactory receptor 4F6 (312 aa).

The Extracellular portion of the chain corresponds to 1–25 (MDEANHSVVSEFVFLGLSDSRKIQL). N-linked (GlcNAc...) asparagine glycosylation is present at Asn5. Residues 26 to 49 (LLFLFFSVFYVSSLMGNLLIVLTV) form a helical membrane-spanning segment. At 50–57 (TSDPRLQS) the chain is on the cytoplasmic side. A helical membrane pass occupies residues 58–79 (PMYFLLANLSIINLVFCSSTAP). Residues 80 to 100 (KMIYDLFRKHKTISFGGCVVQ) are Extracellular-facing. The cysteines at positions 97 and 189 are disulfide-linked. Residues 101 to 120 (IFFIHAVGGTEMVLLIAMAF) form a helical membrane-spanning segment. The Cytoplasmic portion of the chain corresponds to 121–139 (DRYVAICKPLHYLTIMNPQ). A helical transmembrane segment spans residues 140–158 (RCILFLVISWIIGIIHSVI). Topologically, residues 159 to 195 (QLAFVVDLLFCGPNELDSFFCDLPRFIKLACIETYTL) are extracellular. The helical transmembrane segment at 196–219 (GFMVTANSGFISLASFLILIISYI) threads the bilayer. Residues 220–235 (FILVTVQKKSSGGIFK) are Cytoplasmic-facing. Residues 236 to 258 (AFSMLSAHVIVVVLVFGPLIFFY) traverse the membrane as a helical segment. At 259–269 (IFPFPTSHLDK) the chain is on the extracellular side. A helical transmembrane segment spans residues 270 to 289 (FLAIFDAVITPVLNPVIYTF). Residues 290–312 (RNKEMMVAMRRRCSQFVNYSKIF) are Cytoplasmic-facing.

The protein belongs to the G-protein coupled receptor 1 family.

The protein localises to the cell membrane. Odorant receptor. This is Olfactory receptor 4F6 (OR4F6) from Homo sapiens (Human).